A 435-amino-acid polypeptide reads, in one-letter code: 5-methylthioadenosine/S-adenosylhomocysteine deaminase (435 aa).

2 residues coordinate Zn(2+): His-65 and His-67. Positions 94, 150, and 189 each coordinate substrate. Residue His-216 coordinates Zn(2+). Residues Glu-219 and Asp-304 each contribute to the substrate site. Asp-304 lines the Zn(2+) pocket.

This sequence belongs to the metallo-dependent hydrolases superfamily. MTA/SAH deaminase family. Requires Zn(2+) as cofactor.

It catalyses the reaction S-adenosyl-L-homocysteine + H2O + H(+) = S-inosyl-L-homocysteine + NH4(+). The enzyme catalyses S-methyl-5'-thioadenosine + H2O + H(+) = S-methyl-5'-thioinosine + NH4(+). In terms of biological role, catalyzes the deamination of 5-methylthioadenosine and S-adenosyl-L-homocysteine into 5-methylthioinosine and S-inosyl-L-homocysteine, respectively. Is also able to deaminate adenosine. This Bacillus anthracis (strain A0248) protein is 5-methylthioadenosine/S-adenosylhomocysteine deaminase.